Consider the following 99-residue polypeptide: Single insulin-like growth factor-binding domain protein-2 (99 aa).

Residues 1-18 form the signal peptide; it reads MESLFIFAFGMMLSSASA. Positions 19–98 constitute an IGFBP N-terminal domain; sequence LSCIPCVPEE…GQEVGRCRKK (80 aa). Ser20 is a glycosylation site (O-linked (GalNAc...) serine). 6 disulfide bridges follow: Cys21–Cys44, Cys24–Cys46, Cys29–Cys47, Cys35–Cys50, Cys58–Cys74, and Cys68–Cys95.

Expressed in hemocytes.

The protein localises to the secreted. Functionally, has a role in the innate immune system. The sequence is that of Single insulin-like growth factor-binding domain protein-2 from Cupiennius salei (American wandering spider).